Here is a 392-residue protein sequence, read N- to C-terminus: MENDKHNNPKTIFIPDDIAEGIFHHLPIKSLARFKVLSKKWTSMIESTYFSHKRLIRTGLPTPNMKFLHISQHFTANFVEEYSNSITFLLETFSRDDQNNRKTFDESQNKTIQVLGSCDGLVLLRIHDDFRSIYLINPTTKEHMKLSPEFMQWPFTLSYLTPAMANKPWRQLSQSVLDYDISVKRMPSLAGFGKDIVKKSYKVVLIYTRYEIHDHEFKAKVLSLDNGEQRDVGFYDIHHCIFCDEQTSVYANGSLFWLTLKKLSQTSYQLLAIDLHTEEFRWILLPECDTKYATNIEMWNLNERLCLSDVLESSNLVVWSLHQEYPTEKWEKIYSIKIDVIRTNQLHEKFWMLGLAAAYFSNIRNRQDQVSFFRQRTISYLPTMISPSNLML.

Positions 8–55 (NPKTIFIPDDIAEGIFHHLPIKSLARFKVLSKKWTSMIESTYFSHKRL) constitute an F-box domain.

This Arabidopsis thaliana (Mouse-ear cress) protein is Putative F-box protein At1g71320.